The sequence spans 62 residues: Large ribosomal subunit protein bL28 (62 aa).

This sequence belongs to the bacterial ribosomal protein bL28 family.

The polypeptide is Large ribosomal subunit protein bL28 (Phytoplasma mali (strain AT)).